The chain runs to 366 residues: 3-dehydroquinate synthase (366 aa).

NAD(+) contacts are provided by residues 75-80 (DGEEYK), 109-113 (GVVGD), 133-134 (TT), K146, K155, and 173-176 (TLDT). Zn(2+) contacts are provided by E188, H251, and H268.

It belongs to the sugar phosphate cyclases superfamily. Dehydroquinate synthase family. Requires Co(2+) as cofactor. It depends on Zn(2+) as a cofactor. The cofactor is NAD(+).

It is found in the cytoplasm. It catalyses the reaction 7-phospho-2-dehydro-3-deoxy-D-arabino-heptonate = 3-dehydroquinate + phosphate. The protein operates within metabolic intermediate biosynthesis; chorismate biosynthesis; chorismate from D-erythrose 4-phosphate and phosphoenolpyruvate: step 2/7. Its function is as follows. Catalyzes the conversion of 3-deoxy-D-arabino-heptulosonate 7-phosphate (DAHP) to dehydroquinate (DHQ). In Nitrosospira multiformis (strain ATCC 25196 / NCIMB 11849 / C 71), this protein is 3-dehydroquinate synthase.